Consider the following 273-residue polypeptide: Cell division protein ZipA (273 aa).

A topological domain (periplasmic) is located at residue Met-1. The helical transmembrane segment at 2–22 (DIGLREWLIVIGIIVIAGILF) threads the bilayer. Over 23–273 (DGWRRMRGGK…ERRQMTIKQR (251 aa)) the chain is Cytoplasmic. The tract at residues 61–127 (VVNREHEPSL…DLQERPQKEQ (67 aa)) is disordered.

It belongs to the ZipA family. As to quaternary structure, interacts with FtsZ via their C-terminal domains.

It is found in the cell inner membrane. Its function is as follows. Essential cell division protein that stabilizes the FtsZ protofilaments by cross-linking them and that serves as a cytoplasmic membrane anchor for the Z ring. Also required for the recruitment to the septal ring of downstream cell division proteins. In Stutzerimonas stutzeri (strain A1501) (Pseudomonas stutzeri), this protein is Cell division protein ZipA.